Reading from the N-terminus, the 327-residue chain is Aspartate--ammonia ligase (327 aa).

It belongs to the class-II aminoacyl-tRNA synthetase family. AsnA subfamily.

It localises to the cytoplasm. The enzyme catalyses L-aspartate + NH4(+) + ATP = L-asparagine + AMP + diphosphate + H(+). It functions in the pathway amino-acid biosynthesis; L-asparagine biosynthesis; L-asparagine from L-aspartate (ammonia route): step 1/1. The sequence is that of Aspartate--ammonia ligase from Bacillus anthracis (strain A0248).